We begin with the raw amino-acid sequence, 191 residues long: Phosphoheptose isomerase (191 aa).

The SIS domain maps to 37–191 (IADSFKQDGK…IIQLIEKEME (155 aa)). 52-54 (NGG) contacts substrate. 2 residues coordinate Zn(2+): His-61 and Glu-65. Residues Glu-65, 93–94 (ND), 119–121 (STS), Ser-124, and Gln-172 each bind substrate. 2 residues coordinate Zn(2+): Gln-172 and His-180.

The protein belongs to the SIS family. GmhA subfamily. As to quaternary structure, homotetramer. It depends on Zn(2+) as a cofactor.

Its subcellular location is the cytoplasm. The enzyme catalyses 2 D-sedoheptulose 7-phosphate = D-glycero-alpha-D-manno-heptose 7-phosphate + D-glycero-beta-D-manno-heptose 7-phosphate. The protein operates within carbohydrate biosynthesis; D-glycero-D-manno-heptose 7-phosphate biosynthesis; D-glycero-alpha-D-manno-heptose 7-phosphate and D-glycero-beta-D-manno-heptose 7-phosphate from sedoheptulose 7-phosphate: step 1/1. It functions in the pathway bacterial outer membrane biogenesis; LPS core biosynthesis. Catalyzes the isomerization of sedoheptulose 7-phosphate in D-glycero-D-manno-heptose 7-phosphate. This chain is Phosphoheptose isomerase, found in Vibrio parahaemolyticus serotype O3:K6 (strain RIMD 2210633).